The sequence spans 606 residues: Elongation factor 4 (606 aa).

In terms of domain architecture, tr-type G spans Ile10 to Arg192. Residues Asp22–Thr27 and Asn139–Asp142 contribute to the GTP site.

This sequence belongs to the TRAFAC class translation factor GTPase superfamily. Classic translation factor GTPase family. LepA subfamily.

It localises to the cell inner membrane. It catalyses the reaction GTP + H2O = GDP + phosphate + H(+). Functionally, required for accurate and efficient protein synthesis under certain stress conditions. May act as a fidelity factor of the translation reaction, by catalyzing a one-codon backward translocation of tRNAs on improperly translocated ribosomes. Back-translocation proceeds from a post-translocation (POST) complex to a pre-translocation (PRE) complex, thus giving elongation factor G a second chance to translocate the tRNAs correctly. Binds to ribosomes in a GTP-dependent manner. The protein is Elongation factor 4 of Borreliella burgdorferi (strain ATCC 35210 / DSM 4680 / CIP 102532 / B31) (Borrelia burgdorferi).